The primary structure comprises 432 residues: Glutamyl-tRNA reductase (432 aa).

Substrate is bound by residues 55–58 (TCNR), Ser114, 119–121 (ETQ), and Gln125. Cys56 serves as the catalytic Nucleophile. NADP(+) is bound at residue 194–199 (GAGEMI).

The protein belongs to the glutamyl-tRNA reductase family. As to quaternary structure, homodimer.

The enzyme catalyses (S)-4-amino-5-oxopentanoate + tRNA(Glu) + NADP(+) = L-glutamyl-tRNA(Glu) + NADPH + H(+). The protein operates within porphyrin-containing compound metabolism; protoporphyrin-IX biosynthesis; 5-aminolevulinate from L-glutamyl-tRNA(Glu): step 1/2. Catalyzes the NADPH-dependent reduction of glutamyl-tRNA(Glu) to glutamate 1-semialdehyde (GSA). This chain is Glutamyl-tRNA reductase, found in Burkholderia thailandensis (strain ATCC 700388 / DSM 13276 / CCUG 48851 / CIP 106301 / E264).